Consider the following 199-residue polypeptide: Ras-related and estrogen-regulated growth inhibitor (199 aa).

Residues 13–20 (GRAGVGKS), 60–64 (DTAGQ), and 118–121 (NKAD) each bind GTP.

The protein belongs to the small GTPase superfamily. Ras family.

It localises to the cytoplasm. It carries out the reaction GTP + H2O = GDP + phosphate + H(+). Functionally, binds GDP/GTP and possesses intrinsic GTPase activity. Has higher affinity for GDP than for GTP. This chain is Ras-related and estrogen-regulated growth inhibitor (RERG), found in Bos taurus (Bovine).